Reading from the N-terminus, the 59-residue chain is Cecropin-B1 (59 aa).

The signal sequence occupies residues 1–23 (MNFNKLFLIVILAALLLLGQTEA). Residue Leu-57 is modified to Leucine amide.

This sequence belongs to the cecropin family.

It localises to the secreted. Cecropins have lytic and antibacterial activity against several Gram-positive and Gram-negative bacteria. The sequence is that of Cecropin-B1 (CECB1) from Culex pipiens pipiens (Northern house mosquito).